The chain runs to 600 residues: Oligopeptide-binding protein OppA (600 aa).

The signal sequence occupies residues 1 to 22; it reads MNKLKVTLLASSVVLAATLLSA. C23 carries the N-palmitoyl cysteine lipid modification. C23 is lipidated: S-diacylglycerol cysteine.

Belongs to the bacterial solute-binding protein 5 family. In terms of assembly, the complex is composed of two ATP-binding proteins (OppD and OppF), two transmembrane proteins (OppB and OppC) and a solute-binding protein (OppA).

The protein resides in the cell membrane. Its function is as follows. Part of the ABC transporter complex OppABCDF involved in the uptake of oligopeptides. This is Oligopeptide-binding protein OppA from Lactococcus lactis subsp. cremoris (strain SK11).